Reading from the N-terminus, the 319-residue chain is MDLLFLGTSAGVPTKARNVSATAVIEASGSHWYLVDCGEGTQHRLLHTPLSIRDLRAIFITHVHGDHCFGLPGLLASAGMSGRTQPLEVILPAVLHDWVRQGLVASDTFLPFELRLLPVEELIAWRSETLQVTTVQLSHRVPSVGFVFTEINPEPRLDIQRLDAEGITRGPLWGELAKGLTVTYDGQLLNGNDYLRPSRPPRRVIVCGDNDKPELLAAVARGADVLVHEATFTQAVVERTGGTFGHSTAAEVARFAEAAGVRNLVLTHFSARYQNDPRRSPHIDNVRDEALAHYSGQLTLAQDLQRYHLGRNGLLEASA.

Histidine 62, histidine 64, aspartate 66, histidine 67, histidine 139, aspartate 209, and histidine 268 together coordinate Zn(2+). The active-site Proton acceptor is the aspartate 66.

Belongs to the RNase Z family. Homodimer. It depends on Zn(2+) as a cofactor.

The enzyme catalyses Endonucleolytic cleavage of RNA, removing extra 3' nucleotides from tRNA precursor, generating 3' termini of tRNAs. A 3'-hydroxy group is left at the tRNA terminus and a 5'-phosphoryl group is left at the trailer molecule.. Zinc phosphodiesterase, which displays some tRNA 3'-processing endonuclease activity. Probably involved in tRNA maturation, by removing a 3'-trailer from precursor tRNA. The protein is Ribonuclease Z of Pseudomonas putida (strain ATCC 47054 / DSM 6125 / CFBP 8728 / NCIMB 11950 / KT2440).